Reading from the N-terminus, the 346-residue chain is Flap endonuclease 1 (346 aa).

Residues 1–102 form an N-domain region; the sequence is MGVTELGKLI…LEIEQRKKAK (102 aa). Mg(2+) contacts are provided by aspartate 31, aspartate 84, glutamate 156, glutamate 158, aspartate 177, aspartate 179, and aspartate 239. Residues 120–261 are I-domain; that stretch reads DVAKYAKRAI…KALKLIWEFG (142 aa).

This sequence belongs to the XPG/RAD2 endonuclease family. FEN1 subfamily. In terms of assembly, interacts with PCNA. PCNA stimulates the nuclease activity without altering cleavage specificity. It depends on Mg(2+) as a cofactor.

Functionally, structure-specific nuclease with 5'-flap endonuclease and 5'-3' exonuclease activities involved in DNA replication and repair. During DNA replication, cleaves the 5'-overhanging flap structure that is generated by displacement synthesis when DNA polymerase encounters the 5'-end of a downstream Okazaki fragment. Binds the unpaired 3'-DNA end and kinks the DNA to facilitate 5' cleavage specificity. Cleaves one nucleotide into the double-stranded DNA from the junction in flap DNA, leaving a nick for ligation. Also involved in the base excision repair (BER) pathway. Acts as a genome stabilization factor that prevents flaps from equilibrating into structures that lead to duplications and deletions. Also possesses 5'-3' exonuclease activity on nicked or gapped double-stranded DNA. This chain is Flap endonuclease 1, found in Pyrobaculum calidifontis (strain DSM 21063 / JCM 11548 / VA1).